The chain runs to 159 residues: UPF0303 protein Ping_1243 (159 aa).

This sequence belongs to the UPF0303 family.

The chain is UPF0303 protein Ping_1243 from Psychromonas ingrahamii (strain DSM 17664 / CCUG 51855 / 37).